Consider the following 771-residue polypeptide: Chaperone protein dnaK3 (771 aa).

A Phosphothreonine; by autocatalysis modification is found at T198. The tract at residues 624-771 (FDDDDDYYNR…GWDDDDDDWF (148 aa)) is disordered. Basic and acidic residues-rich tracts occupy residues 630–652 (YYNR…RYDD) and 708–734 (YDDR…RENA).

It belongs to the heat shock protein 70 family.

In terms of biological role, acts as a chaperone. The chain is Chaperone protein dnaK3 (dnaK3) from Synechocystis sp. (strain ATCC 27184 / PCC 6803 / Kazusa).